Consider the following 160-residue polypeptide: Cyclic pyranopterin monophosphate synthase (160 aa).

Substrate contacts are provided by residues 73–75 and 110–111; these read LCH and ME. D125 is a catalytic residue.

The protein belongs to the MoaC family. Homohexamer; trimer of dimers.

It carries out the reaction (8S)-3',8-cyclo-7,8-dihydroguanosine 5'-triphosphate = cyclic pyranopterin phosphate + diphosphate. Its pathway is cofactor biosynthesis; molybdopterin biosynthesis. Its function is as follows. Catalyzes the conversion of (8S)-3',8-cyclo-7,8-dihydroguanosine 5'-triphosphate to cyclic pyranopterin monophosphate (cPMP). In Pseudomonas aeruginosa (strain LESB58), this protein is Cyclic pyranopterin monophosphate synthase.